The primary structure comprises 229 residues: Potassium/proton antiporter CemA (229 aa).

4 consecutive transmembrane segments (helical) span residues 7–27 (LASL…SLSF), 106–126 (IILH…YFFL), 154–174 (ILLV…ELMI), and 189–209 (IISG…KYWI).

Belongs to the CemA family.

The protein localises to the plastid. It is found in the chloroplast inner membrane. It catalyses the reaction K(+)(in) + H(+)(out) = K(+)(out) + H(+)(in). In terms of biological role, contributes to K(+)/H(+) antiport activity by supporting proton efflux to control proton extrusion and homeostasis in chloroplasts in a light-dependent manner to modulate photosynthesis. Prevents excessive induction of non-photochemical quenching (NPQ) under continuous-light conditions. Indirectly promotes efficient inorganic carbon uptake into chloroplasts. The protein is Potassium/proton antiporter CemA of Phalaenopsis aphrodite subsp. formosana (Moth orchid).